Consider the following 142-residue polypeptide: Protein Turandot X (142 aa).

The N-terminal stretch at 1–22 (MGLSIGSLLICVFLGIVPFATA) is a signal peptide.

This sequence belongs to the Turandot family.

The protein resides in the secreted. In terms of biological role, a humoral factor that may play a role in stress tolerance. In Drosophila melanogaster (Fruit fly), this protein is Protein Turandot X.